The following is a 531-amino-acid chain: Beta-hexosaminidase subunit beta (531 aa).

Positions 1–24 (MRHRGLGLAALLALLAAVAPRSSA) are cleaved as a signal peptide. A glycan (N-linked (GlcNAc...) asparagine) is linked at N50. C65 and C111 are disulfide-bonded. N-linked (GlcNAc...) asparagine glycans are attached at residues N116, N164, and N301. Cystine bridges form between C283–C334 and C508–C525. E329 serves as the catalytic Proton donor.

It belongs to the glycosyl hydrolase 20 family. There are 3 forms of beta-hexosaminidase: hexosaminidase A is a heterodimer composed of one subunit alpha and one subunit beta (chain A and B); hexosaminidase B is a homodimer of two beta subunits (two chains A and B); hexosaminidase S is a homodimer of two alpha subunits. The composition of the dimer (isozyme A versus isozyme S) has a significant effect on the substrate specificity of the alpha subunit active site.

The protein resides in the lysosome. It is found in the cytoplasmic vesicle. It localises to the secretory vesicle. Its subcellular location is the cortical granule. It catalyses the reaction Hydrolysis of terminal non-reducing N-acetyl-D-hexosamine residues in N-acetyl-beta-D-hexosaminides.. The enzyme catalyses N-acetyl-beta-D-galactosaminyl-(1-&gt;4)-beta-D-3-sulfogalactosyl-(1-&gt;4)-beta-D-glucosyl-(1&lt;-&gt;1')-ceramide + H2O = a beta-D-3-sulfogalactosyl-(1-&gt;4)-beta-D-glucosyl-(1&lt;-&gt;1')-ceramide + N-acetyl-beta-D-galactosamine. The catalysed reaction is a ganglioside GM2 (d18:1(4E)) + H2O = a ganglioside GM3 (d18:1(4E)) + N-acetyl-beta-D-galactosamine. It carries out the reaction a ganglioside GM2 + H2O = a ganglioside GM3 + N-acetyl-beta-D-galactosamine. It catalyses the reaction beta-D-GalNAc-(1-&gt;4)-alpha-L-IdoA-(1-&gt;3)-beta-D-GalNAc-4-sulfate-(1-&gt;4)-alpha-L-IdoA-(1-&gt;3)-D-GalNAc-4-sulfate + H2O = alpha-L-IdoA-(1-&gt;3)-beta-D-GalNAc-4-sulfate-(1-&gt;4)-alpha-L-IdoA-(1-&gt;3)-D-GalNAc-4-sulfate + N-acetyl-D-galactosamine. The enzyme catalyses N-acetyl-beta-D-6-sulfogalactosaminyl-(1-&gt;4)-alpha-L-iduronyl-(1-&gt;3)-N-acetyl-D-6-sulfogalactosamine + H2O = alpha-L-iduronyl-(1-&gt;3)-N-acetyl-D-6-sulfogalactosamine + N-acetyl-D-6-sulfogalactosamine. With respect to regulation, addition of GM2A stimulates the hydrolysis of sulfated glycosphingolipid SM2 and the ganglioside GM2. Functionally, hydrolyzes the non-reducing end N-acetyl-D-hexosamine and/or sulfated N-acetyl-D-hexosamine of glycoconjugates, such as the oligosaccharide moieties from proteins and neutral glycolipids, or from certain mucopolysaccharides. The isozyme B does not hydrolyze each of these substrates, however hydrolyzes efficiently neutral oligosaccharide. Only the isozyme A is responsible for the degradation of GM2 gangliosides in the presence of GM2A. During fertilization is responsible, at least in part, for the zona block to polyspermy. Present in the cortical granules of non-activated oocytes, is exocytosed during the cortical reaction in response to oocyte activation and inactivates the sperm galactosyltransferase-binding site, accounting for the block in sperm binding to the zona pellucida. The polypeptide is Beta-hexosaminidase subunit beta (Felis catus (Cat)).